Reading from the N-terminus, the 378-residue chain is Cytochrome b (378 aa).

Helical transmembrane passes span 33 to 53 (FGSLLGLCLVAQILTGLFLAM), 77 to 98 (WLIRNLHANGASFFFLCLYLHI), 113 to 133 (WNTGILLLLLIMVTAFVGYVL), and 178 to 198 (FFAFHFFIPFIATAVVALHFL). The heme b site is built by H83 and H97. Heme b-binding residues include H182 and H196. H201 lines the a ubiquinone pocket. A run of 4 helical transmembrane segments spans residues 226-246 (YKDLLGFLLLLAPLTALAVFS), 288-308 (LGGVLALLASILVLAVVPFLH), 320-340 (WSQLCLFTLVVTVLILTWIGG), and 347-367 (LTTVGQIASLLYFTIILFLMP).

This sequence belongs to the cytochrome b family. As to quaternary structure, the cytochrome bc1 complex contains 3 respiratory subunits (MT-CYB, CYC1 and UQCRFS1), 2 core proteins (UQCRC1 and UQCRC2) and probably 6 low-molecular weight proteins. It depends on heme b as a cofactor.

The protein resides in the mitochondrion inner membrane. In terms of biological role, component of the ubiquinol-cytochrome c reductase complex (complex III or cytochrome b-c1 complex) that is part of the mitochondrial respiratory chain. The b-c1 complex mediates electron transfer from ubiquinol to cytochrome c. Contributes to the generation of a proton gradient across the mitochondrial membrane that is then used for ATP synthesis. The chain is Cytochrome b (mt-cyb) from Indostomus paradoxus (Armoured stickleback).